The primary structure comprises 169 residues: Protein Flattop homolog (169 aa).

The tract at residues 53–169 (IPRSSRSPWG…SPKLATPEPC (117 aa)) is disordered. Over residues 119-130 (VQASPRNASPLQ) the composition is skewed to polar residues.

It belongs to the Flattop family.

The protein resides in the cytoplasm. The protein localises to the cytoskeleton. It localises to the cilium basal body. Its subcellular location is the cell projection. It is found in the cilium. The protein resides in the apical cell membrane. Functionally, acts as a regulator of cilium basal body docking and positioning in mono- and multiciliated cells. In Nematostella vectensis (Starlet sea anemone), this protein is Protein Flattop homolog.